We begin with the raw amino-acid sequence, 193 residues long: MDSEFFQPVYPRHYGECLSPVSTPSFFSTHMYTILIAIVVLVIIIIVLIYLFSSRKKKAAAAIEEEDIQFINPYQDQQWVEVTPQPGTSKPAGATTASVGKPVTGRPATNRPVTDRPATNNPVTDRLVMATGGPAAASAAASAAASAAASAPAHPAEPYTTVTTQNTASQTMSAIENLRQRSTYTHKDLENSL.

Residues 32–52 traverse the membrane as a helical segment; sequence YTILIAIVVLVIIIIVLIYLF. Residues 84–126 are disordered; sequence PQPGTSKPAGATTASVGKPVTGRPATNRPVTDRPATNNPVTDR. 4 tandem repeats follow at residues 135–138, 139–142, 143–146, and 147–150. The tract at residues 135–150 is 4 X 4 AA tandem repeats of A-A-A-S; the sequence is AAASAAASAAASAAAS. Residues 159–171 are interaction with host DYNLL1; the sequence is YTTVTTQNTASQT.

Belongs to the asfivirus envelope protein p54 family. In terms of assembly, interacts with the host light chain cytoplasmic dynein DYNLL1; this interaction is critical for intracellular microtubule-dependent virus transport toward viral factories.

It is found in the virion membrane. Its subcellular location is the host cytoplasm. The protein resides in the host cytoskeleton. It localises to the host endoplasmic reticulum membrane. Functionally, inner envelope protein involved, through its interaction with host dynein, in the intracellular microtubule-dependent transport of viral capsid toward viral factories. Seems to induce caspase-3 activation and apoptosis. Plays a role in virion morphogenesis by recruiting and transforming the host ER membranes into the precursors of the viral envelope. Involved in virus attachment to the host cell. The polypeptide is Inner membrane protein p54 (Ornithodoros (relapsing fever ticks)).